Here is a 463-residue protein sequence, read N- to C-terminus: uncharacterized protein (463 aa).

The protein belongs to the mycobacterial PPE family.

This is an uncharacterized protein from Mycobacterium tuberculosis (strain CDC 1551 / Oshkosh).